A 357-amino-acid chain; its full sequence is Chorismate synthase (357 aa).

Residues 38–49 (EKDIQPDLDRRK) show a composition bias toward basic and acidic residues. The segment at 38-60 (EKDIQPDLDRRKPGTSRYTTPRR) is disordered. NADP(+) contacts are provided by R48 and R54. Residues 125 to 127 (RSS), 243 to 244 (NA), G283, 298 to 302 (KPTSS), and R324 each bind FMN.

Belongs to the chorismate synthase family. As to quaternary structure, homotetramer. FMNH2 serves as cofactor.

It catalyses the reaction 5-O-(1-carboxyvinyl)-3-phosphoshikimate = chorismate + phosphate. It functions in the pathway metabolic intermediate biosynthesis; chorismate biosynthesis; chorismate from D-erythrose 4-phosphate and phosphoenolpyruvate: step 7/7. Functionally, catalyzes the anti-1,4-elimination of the C-3 phosphate and the C-6 proR hydrogen from 5-enolpyruvylshikimate-3-phosphate (EPSP) to yield chorismate, which is the branch point compound that serves as the starting substrate for the three terminal pathways of aromatic amino acid biosynthesis. This reaction introduces a second double bond into the aromatic ring system. The chain is Chorismate synthase from Haemophilus influenzae (strain PittGG).